Consider the following 907-residue polypeptide: Aldehyde oxidoreductase (907 aa).

Residues 2 to 79 (IQKVITVNGI…GAQITTIEGV (78 aa)) form the 2Fe-2S ferredoxin-type domain. 8 residues coordinate [2Fe-2S] cluster: Cys40, Cys45, Cys48, Cys60, Cys100, Cys103, Cys137, and Cys139. Positions 653 and 869 each coordinate Mo-molybdopterin cytosine dinucleotide.

Belongs to the xanthine dehydrogenase family. As to quaternary structure, homodimer. Mo-molybdopterin cytosine dinucleotide is required as a cofactor. It depends on [2Fe-2S] cluster as a cofactor.

The enzyme catalyses an aldehyde + A + H2O = a carboxylate + AH2 + H(+). The sequence is that of Aldehyde oxidoreductase (mop) from Megalodesulfovibrio gigas (Desulfovibrio gigas).